The following is a 153-amino-acid chain: Insulin-like growth factor 1 (153 aa).

Residues 49 to 77 (GPETLCGAELVDALQFVCGDRGFYFNKPT) form a b region. Cystine bridges form between cysteine 54-cysteine 96, cysteine 66-cysteine 109, and cysteine 95-cysteine 100. A c region spans residues 78-89 (GYGSSSRRAPQT). An a region spans residues 90-110 (GIVDECCFRSCDLRRLEMYCA). Residues 111–118 (PLKPAKSA) form a d region. The propeptide at 119-153 (RSVRAQRHTDMPKAQKEVHLKNASRGSAGNKNYRM) is e peptide. Residues 120–153 (SVRAQRHTDMPKAQKEVHLKNASRGSAGNKNYRM) form a disordered region. Residues 125–138 (RHTDMPKAQKEVHL) show a composition bias toward basic and acidic residues. Residues 142–153 (SRGSAGNKNYRM) show a composition bias toward polar residues.

This sequence belongs to the insulin family. As to quaternary structure, forms a ternary complex with IGFR1 and ITGAV:ITGB3. Forms a ternary complex with IGFR1 and ITGA6:ITGB4. Forms a ternary complex with IGFBP3 and ALS.

It is found in the secreted. Functionally, the insulin-like growth factors, isolated from plasma, are structurally and functionally related to insulin but have a much higher growth-promoting activity. May be a physiological regulator of [1-14C]-2-deoxy-D-glucose (2DG) transport and glycogen synthesis in osteoblasts. Stimulates glucose transport in bone-derived osteoblastic (PyMS) cells and is effective at much lower concentrations than insulin, not only regarding glycogen and DNA synthesis but also with regard to enhancing glucose uptake. May play a role in synapse maturation. Ca(2+)-dependent exocytosis of IGF1 is required for sensory perception of smell in the olfactory bulb. Acts as a ligand for IGF1R. Binds to the alpha subunit of IGF1R, leading to the activation of the intrinsic tyrosine kinase activity which autophosphorylates tyrosine residues in the beta subunit thus initiating a cascade of down-stream signaling events leading to activation of the PI3K-AKT/PKB and the Ras-MAPK pathways. Binds to integrins ITGAV:ITGB3 and ITGA6:ITGB4. Its binding to integrins and subsequent ternary complex formation with integrins and IGFR1 are essential for IGF1 signaling. Induces the phosphorylation and activation of IGFR1, MAPK3/ERK1, MAPK1/ERK2 and AKT1. As part of the MAPK/ERK signaling pathway, acts as a negative regulator of apoptosis in cardiomyocytes via promotion of STUB1/CHIP-mediated ubiquitination and degradation of ICER-type isoforms of CREM. This is Insulin-like growth factor 1 from Rhinopithecus roxellana (Golden snub-nosed monkey).